Consider the following 424-residue polypeptide: Serine hydroxymethyltransferase 2 (424 aa).

(6S)-5,6,7,8-tetrahydrofolate is bound by residues Leu125 and 129 to 131; that span reads GHL. The residue at position 234 (Lys234) is an N6-(pyridoxal phosphate)lysine. Glu250 provides a ligand contact to (6S)-5,6,7,8-tetrahydrofolate.

It belongs to the SHMT family. Homodimer. The cofactor is pyridoxal 5'-phosphate.

The protein localises to the cytoplasm. The catalysed reaction is (6R)-5,10-methylene-5,6,7,8-tetrahydrofolate + glycine + H2O = (6S)-5,6,7,8-tetrahydrofolate + L-serine. The protein operates within one-carbon metabolism; tetrahydrofolate interconversion. It participates in amino-acid biosynthesis; glycine biosynthesis; glycine from L-serine: step 1/1. Functionally, catalyzes the reversible interconversion of serine and glycine with tetrahydrofolate (THF) serving as the one-carbon carrier. This reaction serves as the major source of one-carbon groups required for the biosynthesis of purines, thymidylate, methionine, and other important biomolecules. Also exhibits THF-independent aldolase activity toward beta-hydroxyamino acids, producing glycine and aldehydes, via a retro-aldol mechanism. The polypeptide is Serine hydroxymethyltransferase 2 (Cupriavidus pinatubonensis (strain JMP 134 / LMG 1197) (Cupriavidus necator (strain JMP 134))).